Reading from the N-terminus, the 124-residue chain is Large ribosomal subunit protein bL20 (124 aa).

It belongs to the bacterial ribosomal protein bL20 family.

Its function is as follows. Binds directly to 23S ribosomal RNA and is necessary for the in vitro assembly process of the 50S ribosomal subunit. It is not involved in the protein synthesizing functions of that subunit. In Gemmatimonas aurantiaca (strain DSM 14586 / JCM 11422 / NBRC 100505 / T-27), this protein is Large ribosomal subunit protein bL20.